The primary structure comprises 116 residues: Outer membrane protein assembly factor BamE (116 aa).

A signal peptide spans 1–22 (MITMRCKMLTAAAVMLAMLTAG). A lipid anchor (N-palmitoyl cysteine) is attached at Cys-23. Cys-23 carries the S-diacylglycerol cysteine lipid modification.

It belongs to the BamE family. In terms of assembly, part of the Bam complex, which is composed of the outer membrane protein BamA, and four lipoproteins BamB, BamC, BamD and BamE.

The protein localises to the cell outer membrane. Functionally, part of the outer membrane protein assembly complex, which is involved in assembly and insertion of beta-barrel proteins into the outer membrane. This chain is Outer membrane protein assembly factor BamE, found in Yersinia pestis.